The primary structure comprises 148 residues: Putative FAD-linked sulfhydryl oxidase 096R (148 aa).

Residues 1–103 form the ERV/ALR sulfhydryl oxidase domain; that stretch reads MSIDPKLWGN…LAAKTVFQRY (103 aa). Cysteines 48 and 51 form a disulfide. A helical membrane pass occupies residues 122 to 142; it reads WSPWLTTALAVILVVVVAGIG.

It belongs to the IIV-6 347L family. FAD is required as a cofactor.

It localises to the membrane. It carries out the reaction 2 R'C(R)SH + O2 = R'C(R)S-S(R)CR' + H2O2. In terms of biological role, FAD-dependent sulfhydryl oxidase that catalyzes disulfide bond formation. This chain is Putative FAD-linked sulfhydryl oxidase 096R, found in Aedes vexans (Inland floodwater mosquito).